A 125-amino-acid chain; its full sequence is Large ribosomal subunit protein bL20 (125 aa).

The protein belongs to the bacterial ribosomal protein bL20 family.

In terms of biological role, binds directly to 23S ribosomal RNA and is necessary for the in vitro assembly process of the 50S ribosomal subunit. It is not involved in the protein synthesizing functions of that subunit. In Methylobacterium radiotolerans (strain ATCC 27329 / DSM 1819 / JCM 2831 / NBRC 15690 / NCIMB 10815 / 0-1), this protein is Large ribosomal subunit protein bL20.